The sequence spans 2363 residues: Highly reducing polyketide synthase cnsI (2363 aa).

In terms of domain architecture, Ketosynthase family 3 (KS3) spans 14-440 (PEPIAIIGMS…GSNAHAIVES (427 aa)). Active-site for beta-ketoacyl synthase activity residues include Cys187, His322, and His363. The malonyl-CoA:ACP transacylase (MAT) domain stretch occupies residues 546–854 (LAFVFTGQGA…FLQVLKSINA (309 aa)). Ser638 acts as the For malonyltransferase activity in catalysis. An N-terminal hotdog fold region spans residues 938–1068 (HDLLGSPMDF…GTFTLHYDAR (131 aa)). The interval 938–1224 (HDLLGSPMDF…RLDSIASDVS (287 aa)) is dehydratase (DH) domain. The PKS/mFAS DH domain maps to 938 to 1246 (HDLLGSPMDF…LGPVPMSKVP (309 aa)). The active-site Proton acceptor; for dehydratase activity is the His970. The tract at residues 1089-1246 (TAECETNRDA…LGPVPMSKVP (158 aa)) is C-terminal hotdog fold. Asp1159 acts as the Proton donor; for dehydratase activity in catalysis. The tract at residues 1669–1976 (GGQWVEDRQL…ARQTGISVAI (308 aa)) is enoylreductase (ER) domain. Residues 2001–2177 (TYLLAGGLGM…PGHSIDIGLV (177 aa)) form a catalytic ketoreductase (KRc) domain region. The region spanning 2279 to 2357 (EDASYVVNQA…VLSEKIAAQS (79 aa)) is the Carrier domain. Ser2317 carries the O-(pantetheine 4'-phosphoryl)serine modification.

Its pathway is alkaloid biosynthesis. In terms of biological role, highly reducing polyketide synthase; part of the gene cluster that mediates the biosynthesis of communesins, a prominent class of indole alkaloids with great potential as pharmaceuticals. Communesins are biosynthesized by the coupling of tryptamine and aurantioclavine, two building blocks derived from L-tryptophan. The L-tryptophan decarboxylase cnsB converts L-tryptophan to tryptamine, whereas the tryptophan dimethylallyltransferase cnsF converts L-tryptophan to 4-dimethylallyl tryptophan which is further transformed to aurantioclavine by the aurantioclavine synthase cnsA, probably aided by the catalase cnsD. The cytochrome P450 monooxygenase cnsC catalyzes the heterodimeric coupling between the two different indole moieties, tryptamine and aurantioclavine, to construct vicinal quaternary stereocenters and yield the heptacyclic communesin scaffold. The O-methyltransferase cnsE then methylates the communesin scaffold to produce communesin K, the simplest characterized communesin that contains the heptacyclic core. The dioxygenase cnsJ converts communesin K into communesin I. Acylation to introduce the hexadienyl group at position N16 of communesin I by the acyltransferase cnsK leads to the production of communesin B. The hexadienyl group is produced by the highly reducing polyketide synthase cnsI, before being hydrolytically removed from cnsI by the serine hydrolase cnsH, converted into hexadienyl-CoA by the CoA ligase cnsG, and then transferred to communesin I by cnsK. Surprisingly, cnsK may also be a promiscuous acyltransferase that can tolerate a range of acyl groups, including acetyl-, propionyl-, and butyryl-CoA, which lead to communesins A, G and H respectively. The roles of the alpha-ketoglutarate-dependent dioxygenases cnsM and cnsP have still to be determined. This is Highly reducing polyketide synthase cnsI from Penicillium expansum (Blue mold rot fungus).